The sequence spans 1026 residues: Multidrug resistance protein MdtC (1026 aa).

A run of 11 helical transmembrane segments spans residues 15 to 35 (ILIA…LPVA), 333 to 353 (EVEE…FLFL), 360 to 380 (LIPA…MYLC), 387 to 407 (LSLM…IVVL), 431 to 451 (VGFT…PLLL), 463 to 483 (FAVT…TLTP), 528 to 548 (LVGV…IAIP), 853 to 873 (LILI…LYES), 897 to 917 (LFNA…IGIV), 953 to 973 (PIMM…LSGG), and 984 to 1004 (ITIV…TPVV).

It belongs to the resistance-nodulation-cell division (RND) (TC 2.A.6) family. MdtC subfamily. As to quaternary structure, part of a tripartite efflux system composed of MdtA, MdtB and MdtC. MdtC forms a heteromultimer with MdtB.

The protein localises to the cell inner membrane. In Salmonella choleraesuis (strain SC-B67), this protein is Multidrug resistance protein MdtC.